A 164-amino-acid chain; its full sequence is Cyclic pyranopterin monophosphate synthase (164 aa).

Substrate is bound by residues 75–77 (MCH) and 116–117 (ME). Aspartate 131 is an active-site residue.

This sequence belongs to the MoaC family. In terms of assembly, homohexamer; trimer of dimers.

The enzyme catalyses (8S)-3',8-cyclo-7,8-dihydroguanosine 5'-triphosphate = cyclic pyranopterin phosphate + diphosphate. It participates in cofactor biosynthesis; molybdopterin biosynthesis. Functionally, catalyzes the conversion of (8S)-3',8-cyclo-7,8-dihydroguanosine 5'-triphosphate to cyclic pyranopterin monophosphate (cPMP). The polypeptide is Cyclic pyranopterin monophosphate synthase (Staphylococcus aureus (strain Mu3 / ATCC 700698)).